The following is a 477-amino-acid chain: Aspartyl/glutamyl-tRNA(Asn/Gln) amidotransferase subunit B (477 aa).

Belongs to the GatB/GatE family. GatB subfamily. Heterotrimer of A, B and C subunits.

The catalysed reaction is L-glutamyl-tRNA(Gln) + L-glutamine + ATP + H2O = L-glutaminyl-tRNA(Gln) + L-glutamate + ADP + phosphate + H(+). The enzyme catalyses L-aspartyl-tRNA(Asn) + L-glutamine + ATP + H2O = L-asparaginyl-tRNA(Asn) + L-glutamate + ADP + phosphate + 2 H(+). Functionally, allows the formation of correctly charged Asn-tRNA(Asn) or Gln-tRNA(Gln) through the transamidation of misacylated Asp-tRNA(Asn) or Glu-tRNA(Gln) in organisms which lack either or both of asparaginyl-tRNA or glutaminyl-tRNA synthetases. The reaction takes place in the presence of glutamine and ATP through an activated phospho-Asp-tRNA(Asn) or phospho-Glu-tRNA(Gln). This chain is Aspartyl/glutamyl-tRNA(Asn/Gln) amidotransferase subunit B, found in Legionella pneumophila subsp. pneumophila (strain Philadelphia 1 / ATCC 33152 / DSM 7513).